The sequence spans 799 residues: Sodium- and chloride-dependent glycine transporter 2 (799 aa).

The segment at 1-64 (MDCSAPKEMN…RSASTGAQTF (64 aa)) is disordered. Topologically, residues 1-201 (MDCSAPKEMN…ARGNWSSKLD (201 aa)) are cytoplasmic. A compositionally biased stretch (low complexity) spans 40–57 (PAAAPAAAVQPPRVPRSA). Position 58 is a phosphoserine (Ser58). Thr59 carries the phosphothreonine modification. Phosphoserine is present on Ser86. The next 3 membrane-spanning stretches (helical) occupy residues 202–222 (FILS…FPYL), 230–249 (AFLI…IFFL), and 273–293 (GCGI…NVII). Positions 208, 210, 211, and 215 each coordinate Na(+). The Extracellular segment spans residues 294–395 (CYTLFYLFAS…AGIEYPGEIR (102 aa)). Cys313 and Cys322 are disulfide-bonded. Asn345, Asn355, Asn360, and Asn366 each carry an N-linked (GlcNAc...) asparagine glycan. The next 5 helical transmembrane spans lie at 396–414 (WPLA…ASLA), 423–440 (VVYF…ILLI), 476–493 (IFFS…LSSY), 505–526 (LIVT…FSVI), and 559–578 (LPLS…TLGL). Residues Ser479, Asn511, Leu576, and Asp579 each coordinate Na(+). Helical transmembrane passes span 606–624 (VFTL…PMIT), 640–660 (SYAL…VYGL), 681–700 (VCWA…FSFY), and 719–737 (LGWL…MFVI). Residues 738–799 (KMYLAPGRFI…VKDLELGTQC (62 aa)) lie on the Cytoplasmic side of the membrane.

Belongs to the sodium:neurotransmitter symporter (SNF) (TC 2.A.22) family. SLC6A5 subfamily. In terms of processing, N-glycosylated. As to expression, specifically expressed in spinal cord, brain stem, and to a lesser extent in the cerebellum.

Its subcellular location is the cell membrane. It carries out the reaction glycine(out) + chloride(out) + 3 Na(+)(out) = glycine(in) + chloride(in) + 3 Na(+)(in). Sodium- and chloride-dependent glycine transporter. Terminates the action of glycine by its high affinity sodium-dependent reuptake into presynaptic terminals. May be responsible for the termination of neurotransmission at strychnine-sensitive glycinergic synapses. The chain is Sodium- and chloride-dependent glycine transporter 2 (Slc6a5) from Rattus norvegicus (Rat).